Consider the following 58-residue polypeptide: Large ribosomal subunit protein bL32 (58 aa).

Belongs to the bacterial ribosomal protein bL32 family.

In Staphylococcus aureus (strain NCTC 8325 / PS 47), this protein is Large ribosomal subunit protein bL32.